Reading from the N-terminus, the 876-residue chain is Alanine--tRNA ligase (876 aa).

Residues His564, His568, Cys666, and His670 each contribute to the Zn(2+) site.

Belongs to the class-II aminoacyl-tRNA synthetase family. Homotetramer. Zn(2+) serves as cofactor.

The protein resides in the cytoplasm. The enzyme catalyses tRNA(Ala) + L-alanine + ATP = L-alanyl-tRNA(Ala) + AMP + diphosphate. In terms of biological role, catalyzes the attachment of alanine to tRNA(Ala) in a two-step reaction: alanine is first activated by ATP to form Ala-AMP and then transferred to the acceptor end of tRNA(Ala). Also edits incorrectly charged Ser-tRNA(Ala) and Gly-tRNA(Ala) via its editing domain. This chain is Alanine--tRNA ligase, found in Salmonella paratyphi B (strain ATCC BAA-1250 / SPB7).